The sequence spans 30 residues: GFPCGESCVYIPCFTAAIGCSCKSKVCYKN.

Residues 1 to 30 (GFPCGESCVYIPCFTAAIGCSCKSKVCYKN) constitute a cross-link (cyclopeptide (Gly-Asn)). Disulfide bonds link cysteine 4-cysteine 20, cysteine 8-cysteine 22, and cysteine 13-cysteine 27.

Post-translationally, this is a cyclic peptide. In terms of tissue distribution, detected in stems (at protein level).

Probably participates in a plant defense mechanism. Has strong cytotoxic activity against HUVEC cells (LC(50)= 0.58 uM) and various cancer cells including HeLa (LC(50)= 0.48 uM), MCF-7 and K562. Also displays some hemolytic activity. Binds to and induces leakage in phospholipd membranes, particularly ones containing 1-palmitoyl-2-oleophosphatidylethanolamine (POPE). This chain is Cyclotide hyen-D, found in Pigea enneasperma (Spade flower).